We begin with the raw amino-acid sequence, 451 residues long: uncharacterized protein (451 aa).

An N-terminal signal peptide occupies residues 1–22 (MKLKLIFSLFLVLVFCSLFVFG). 5 N-linked (GlcNAc...) asparagine glycosylation sites follow: Asn25, Asn45, Asn209, Asn326, and Asn402.

Its subcellular location is the secreted. This is an uncharacterized protein from Dictyostelium discoideum (Social amoeba).